Consider the following 283-residue polypeptide: Phosphatidylserine decarboxylase proenzyme (283 aa).

Catalysis depends on charge relay system; for autoendoproteolytic cleavage activity residues D88, H145, and S248. The Schiff-base intermediate with substrate; via pyruvic acid; for decarboxylase activity role is filled by S248. Pyruvic acid (Ser); by autocatalysis is present on S248.

This sequence belongs to the phosphatidylserine decarboxylase family. PSD-B subfamily. Prokaryotic type I sub-subfamily. In terms of assembly, heterodimer of a large membrane-associated beta subunit and a small pyruvoyl-containing alpha subunit. Pyruvate serves as cofactor. Is synthesized initially as an inactive proenzyme. Formation of the active enzyme involves a self-maturation process in which the active site pyruvoyl group is generated from an internal serine residue via an autocatalytic post-translational modification. Two non-identical subunits are generated from the proenzyme in this reaction, and the pyruvate is formed at the N-terminus of the alpha chain, which is derived from the carboxyl end of the proenzyme. The autoendoproteolytic cleavage occurs by a canonical serine protease mechanism, in which the side chain hydroxyl group of the serine supplies its oxygen atom to form the C-terminus of the beta chain, while the remainder of the serine residue undergoes an oxidative deamination to produce ammonia and the pyruvoyl prosthetic group on the alpha chain. During this reaction, the Ser that is part of the protease active site of the proenzyme becomes the pyruvoyl prosthetic group, which constitutes an essential element of the active site of the mature decarboxylase.

The protein localises to the cell membrane. The catalysed reaction is a 1,2-diacyl-sn-glycero-3-phospho-L-serine + H(+) = a 1,2-diacyl-sn-glycero-3-phosphoethanolamine + CO2. Its pathway is phospholipid metabolism; phosphatidylethanolamine biosynthesis; phosphatidylethanolamine from CDP-diacylglycerol: step 2/2. Its function is as follows. Catalyzes the formation of phosphatidylethanolamine (PtdEtn) from phosphatidylserine (PtdSer). In Variovorax paradoxus (strain S110), this protein is Phosphatidylserine decarboxylase proenzyme.